The sequence spans 151 residues: Large ribosomal subunit protein bL9 (151 aa).

The protein belongs to the bacterial ribosomal protein bL9 family.

Its function is as follows. Binds to the 23S rRNA. The protein is Large ribosomal subunit protein bL9 of Kosmotoga olearia (strain ATCC BAA-1733 / DSM 21960 / TBF 19.5.1).